Reading from the N-terminus, the 310-residue chain is 2-methoxy-6-polyprenyl-1,4-benzoquinol methylase, mitochondrial (310 aa).

The N-terminal 6 residues, 1-6, are a transit peptide targeting the mitochondrion; it reads MAHMRS. S-adenosyl-L-methionine contacts are provided by residues threonine 99, aspartate 154, and 182–183; that span reads DA.

The protein belongs to the class I-like SAM-binding methyltransferase superfamily. MenG/UbiE family. Component of a multi-subunit COQ enzyme complex, composed of at least coq3, coq4, coq5, coq6, coq7 and coq9.

The protein resides in the mitochondrion inner membrane. The catalysed reaction is a 2-methoxy-6-(all-trans-polyprenyl)benzene-1,4-diol + S-adenosyl-L-methionine = a 5-methoxy-2-methyl-3-(all-trans-polyprenyl)benzene-1,4-diol + S-adenosyl-L-homocysteine + H(+). It participates in cofactor biosynthesis; ubiquinone biosynthesis. Its function is as follows. Methyltransferase required for the conversion of 2-polyprenyl-6-methoxy-1,4-benzoquinol (DDMQH2) to 2-polyprenyl-3-methyl-6-methoxy-1,4-benzoquinol (DMQH2). The protein is 2-methoxy-6-polyprenyl-1,4-benzoquinol methylase, mitochondrial of Xenopus laevis (African clawed frog).